The sequence spans 413 residues: MADWQVIEGNITAPKGFKAAGITAGLKPSGSPDLSLIYSETEAIAAGVFTTSQVRAACVDYCRQRLQAKASARAILVNSGQANAGTGKQGWDDAVESAQLLAQGLNISPESILLASTGVIGQRIKMEQLRQGITPLIQSLAPNGGDKAARAIMTTDLVPKTIALETEIDGRPVRMGGIAKGSGMIHPNMATMLAFVTCDAAVSTALWQQMLSRATQKTFNQVTVDGDTSTNDSLFALANGESRTAAITEMGPNAEKLEAMLTAVCQHLAKAIARDGEGATCLMEIQVTGAPDDQSARAVARTIAGSSLVKSAVFGRDPNWGRIAGAAGRAGVKFDQNNLLIKLGNYVLMDQGQPLEFDRPGASNYLKQAASGAYLEQDTVLIQVDLGTGSGQGTAWGCDLSYDYVRINADYTT.

Substrate contacts are provided by Thr154, Lys180, Thr191, Glu277, Asn408, and Thr413. Thr191 (nucleophile) is an active-site residue.

It belongs to the ArgJ family. Heterotetramer of two alpha and two beta chains.

The protein localises to the cytoplasm. It catalyses the reaction N(2)-acetyl-L-ornithine + L-glutamate = N-acetyl-L-glutamate + L-ornithine. It carries out the reaction L-glutamate + acetyl-CoA = N-acetyl-L-glutamate + CoA + H(+). Its pathway is amino-acid biosynthesis; L-arginine biosynthesis; L-ornithine and N-acetyl-L-glutamate from L-glutamate and N(2)-acetyl-L-ornithine (cyclic): step 1/1. The protein operates within amino-acid biosynthesis; L-arginine biosynthesis; N(2)-acetyl-L-ornithine from L-glutamate: step 1/4. Functionally, catalyzes two activities which are involved in the cyclic version of arginine biosynthesis: the synthesis of N-acetylglutamate from glutamate and acetyl-CoA as the acetyl donor, and of ornithine by transacetylation between N(2)-acetylornithine and glutamate. In Synechocystis sp. (strain ATCC 27184 / PCC 6803 / Kazusa), this protein is Arginine biosynthesis bifunctional protein ArgJ.